We begin with the raw amino-acid sequence, 353 residues long: MTATLERRESSNLWGRFCDWVTSTENRLYIGWFGVLMIPTLLTATSVFIIAFIAAPPVDIDGIREPVSGSLLYGNNIISGAIVPTSAAIGLHFYPIWEAASLDEWLYNGGPYEMIVLHFLLGVACYMGREWELSFRLGMRPWIAVAYSAPVAAATAVFLIYPIGQGSFSDGMPLGISGTFNFMIVFQAEHNILMHPFHMLGVAGVFGGSLFSAMHGSLVTSSLIRETTENESANAGYKFGQEEETYNIVAAHGYFGRLIFQYASFNNSRSLHFFLAAWPVVGIWFTALGISTMAFNLNGFNFNQSVVDSQGRVINTWADIINRANLGMEVMHERNAHNFPLDLASVEAPSINA.

Thr2 carries the post-translational modification N-acetylthreonine. Thr2 bears the Phosphothreonine mark. 3 helical membrane passes run 29–46 (YIGW…TATS), 118–133 (HFLL…EWEL), and 142–156 (WIAV…AATA). His118 contacts chlorophyll a. Tyr126 is a pheophytin a binding site. The [CaMn4O5] cluster site is built by Asp170 and Glu189. Residues 197–218 (FHMLGVAGVFGGSLFSAMHGSL) traverse the membrane as a helical segment. His198 lines the chlorophyll a pocket. A quinone-binding positions include His215 and 264 to 265 (SF). His215 provides a ligand contact to Fe cation. Fe cation is bound at residue His272. Residues 274-288 (FLAAWPVVGIWFTAL) form a helical membrane-spanning segment. Residues His332, Glu333, Asp342, and Ala344 each contribute to the [CaMn4O5] cluster site. Positions 345 to 353 (SVEAPSINA) are excised as a propeptide.

Belongs to the reaction center PufL/M/PsbA/D family. PSII is composed of 1 copy each of membrane proteins PsbA, PsbB, PsbC, PsbD, PsbE, PsbF, PsbH, PsbI, PsbJ, PsbK, PsbL, PsbM, PsbT, PsbX, PsbY, PsbZ, Psb30/Ycf12, at least 3 peripheral proteins of the oxygen-evolving complex and a large number of cofactors. It forms dimeric complexes. The D1/D2 heterodimer binds P680, chlorophylls that are the primary electron donor of PSII, and subsequent electron acceptors. It shares a non-heme iron and each subunit binds pheophytin, quinone, additional chlorophylls, carotenoids and lipids. D1 provides most of the ligands for the Mn4-Ca-O5 cluster of the oxygen-evolving complex (OEC). There is also a Cl(-1) ion associated with D1 and D2, which is required for oxygen evolution. The PSII complex binds additional chlorophylls, carotenoids and specific lipids. serves as cofactor. Tyr-161 forms a radical intermediate that is referred to as redox-active TyrZ, YZ or Y-Z. Post-translationally, C-terminally processed by CTPA; processing is essential to allow assembly of the oxygen-evolving complex and thus photosynthetic growth.

Its subcellular location is the plastid. The protein localises to the chloroplast thylakoid membrane. It carries out the reaction 2 a plastoquinone + 4 hnu + 2 H2O = 2 a plastoquinol + O2. In terms of biological role, photosystem II (PSII) is a light-driven water:plastoquinone oxidoreductase that uses light energy to abstract electrons from H(2)O, generating O(2) and a proton gradient subsequently used for ATP formation. It consists of a core antenna complex that captures photons, and an electron transfer chain that converts photonic excitation into a charge separation. The D1/D2 (PsbA/PsbD) reaction center heterodimer binds P680, the primary electron donor of PSII as well as several subsequent electron acceptors. The sequence is that of Photosystem II protein D1 from Chara vulgaris (Common stonewort).